We begin with the raw amino-acid sequence, 314 residues long: Aspartate carbamoyltransferase catalytic subunit (314 aa).

Carbamoyl phosphate contacts are provided by R53 and T54. An L-aspartate-binding site is contributed by K82. Carbamoyl phosphate-binding residues include R103, H131, and Q134. Residues R164 and R230 each contribute to the L-aspartate site. Residues L267 and P268 each contribute to the carbamoyl phosphate site.

The protein belongs to the aspartate/ornithine carbamoyltransferase superfamily. ATCase family. In terms of assembly, heterooligomer of catalytic and regulatory chains.

The catalysed reaction is carbamoyl phosphate + L-aspartate = N-carbamoyl-L-aspartate + phosphate + H(+). The protein operates within pyrimidine metabolism; UMP biosynthesis via de novo pathway; (S)-dihydroorotate from bicarbonate: step 2/3. Its function is as follows. Catalyzes the condensation of carbamoyl phosphate and aspartate to form carbamoyl aspartate and inorganic phosphate, the committed step in the de novo pyrimidine nucleotide biosynthesis pathway. In Methanococcus aeolicus (strain ATCC BAA-1280 / DSM 17508 / OCM 812 / Nankai-3), this protein is Aspartate carbamoyltransferase catalytic subunit.